A 317-amino-acid polypeptide reads, in one-letter code: TTVAATKLTSLKATAGKLGYREICQVRQWAPLKSAMPHFGMLRCATSTVVKAQAQAQATATEQTTEEAVPKVESPVVVVTGASRGIGKAIALSLGKAGCKVLVNYARSAKEAEEVSKQIEEYGGEAITFGGDVSKEADVDSMMKTAVDKWGTIDVVVNNAGITRDTLLIRMKKSQWDEVIDLNLTGVFLCTQAATKIMMKKRKGRIINIASVVGLIGNIGQANYAAAKAGVIGFSKTAAREGASRNINVNVVCPGFIASDMTAKLGEDMEKKILGTIPLGRYGQPEYVAGLVEFLALSPASSYITGHTFSIHGGFAI.

Residues Thr-1–Gln-57 constitute a chloroplast transit peptide. An NADP(+)-binding site is contributed by Val-79–Val-103. Ser-211 contributes to the substrate binding site. Tyr-224 (proton acceptor) is an active-site residue.

The protein belongs to the short-chain dehydrogenases/reductases (SDR) family. In terms of assembly, homotetramer.

The protein localises to the plastid. It is found in the chloroplast. It carries out the reaction a (3R)-hydroxyacyl-[ACP] + NADP(+) = a 3-oxoacyl-[ACP] + NADPH + H(+). It participates in lipid metabolism; fatty acid biosynthesis. The polypeptide is 3-oxoacyl-[acyl-carrier-protein] reductase 5, chloroplastic (bkr1) (Brassica napus (Rape)).